We begin with the raw amino-acid sequence, 1095 residues long: DNA-directed RNA polymerase subunit beta (1095 aa).

Residues 1069 to 1095 are disordered; sequence DLMQDVNPRRSTPSRPTYESLGKEYEE.

This sequence belongs to the RNA polymerase beta chain family. As to quaternary structure, in cyanobacteria the RNAP catalytic core is composed of 2 alpha, 1 beta, 1 beta', 1 gamma and 1 omega subunit. When a sigma factor is associated with the core the holoenzyme is formed, which can initiate transcription.

It carries out the reaction RNA(n) + a ribonucleoside 5'-triphosphate = RNA(n+1) + diphosphate. In terms of biological role, DNA-dependent RNA polymerase catalyzes the transcription of DNA into RNA using the four ribonucleoside triphosphates as substrates. This chain is DNA-directed RNA polymerase subunit beta, found in Prochlorococcus marinus (strain NATL1A).